The following is a 796-amino-acid chain: ER degradation-enhancing alpha-mannosidase-like protein 1 (796 aa).

A signal peptide spans 1–20 (MVCCLWVLLALLLHLDHVAC). Asn86 carries an N-linked (GlcNAc...) asparagine glycan. The active-site Proton donor is the Glu372. Thr495 contacts Ca(2+). N-linked (GlcNAc...) asparagine glycans are attached at residues Asn517, Asn672, and Asn762.

It belongs to the glycosyl hydrolase 47 family. In terms of assembly, interacts with PDI1. Ca(2+) is required as a cofactor.

It localises to the endoplasmic reticulum lumen. It catalyses the reaction Hydrolysis of terminal, non-reducing alpha-D-mannose residues in alpha-D-mannosides.. It participates in protein modification; protein glycosylation. In terms of biological role, alpha-1,2-specific exomannosidase involved in endoplasmic reticulum-associated degradation (ERAD). Delivers misfolded glycoproteins to proteasomes. Forms a complex with PDI1 to process unfolded protein-bound Man8GlcNAc2 oligosaccharides to Man7GlcNAc2, promoting degradation in unfolded protein response. In Saccharomyces cerevisiae (strain ATCC 204508 / S288c) (Baker's yeast), this protein is ER degradation-enhancing alpha-mannosidase-like protein 1 (MNL1).